A 270-amino-acid chain; its full sequence is 4-hydroxy-tetrahydrodipicolinate reductase (270 aa).

NAD(+)-binding positions include 9–14 and Glu35; that span reads GAGGRM. Position 36 (Arg36) interacts with NADP(+). Residues 99 to 101 and 123 to 126 each bind NAD(+); these read GTT and ASNF. His156 serves as the catalytic Proton donor/acceptor. Residue His157 participates in (S)-2,3,4,5-tetrahydrodipicolinate binding. The active-site Proton donor is the Lys160. 166-167 serves as a coordination point for (S)-2,3,4,5-tetrahydrodipicolinate; it reads GT.

This sequence belongs to the DapB family.

The protein localises to the cytoplasm. The enzyme catalyses (S)-2,3,4,5-tetrahydrodipicolinate + NAD(+) + H2O = (2S,4S)-4-hydroxy-2,3,4,5-tetrahydrodipicolinate + NADH + H(+). It carries out the reaction (S)-2,3,4,5-tetrahydrodipicolinate + NADP(+) + H2O = (2S,4S)-4-hydroxy-2,3,4,5-tetrahydrodipicolinate + NADPH + H(+). It functions in the pathway amino-acid biosynthesis; L-lysine biosynthesis via DAP pathway; (S)-tetrahydrodipicolinate from L-aspartate: step 4/4. Its function is as follows. Catalyzes the conversion of 4-hydroxy-tetrahydrodipicolinate (HTPA) to tetrahydrodipicolinate. The polypeptide is 4-hydroxy-tetrahydrodipicolinate reductase (Haemophilus influenzae (strain PittGG)).